The primary structure comprises 327 residues: Glycerol-3-phosphate dehydrogenase [NAD(P)+] (327 aa).

Residues Trp11, His30, and Lys103 each contribute to the NADPH site. Sn-glycerol 3-phosphate is bound by residues Lys103, Gly131, and Ser133. NADPH is bound at residue Ala135. Residues Lys186, Asp243, Ser253, Arg254, and Asn255 each contribute to the sn-glycerol 3-phosphate site. Lys186 acts as the Proton acceptor in catalysis. Residue Arg254 coordinates NADPH. Residues Val281 and Glu283 each contribute to the NADPH site.

This sequence belongs to the NAD-dependent glycerol-3-phosphate dehydrogenase family.

The protein resides in the cytoplasm. The catalysed reaction is sn-glycerol 3-phosphate + NAD(+) = dihydroxyacetone phosphate + NADH + H(+). It carries out the reaction sn-glycerol 3-phosphate + NADP(+) = dihydroxyacetone phosphate + NADPH + H(+). The protein operates within membrane lipid metabolism; glycerophospholipid metabolism. Functionally, catalyzes the reduction of the glycolytic intermediate dihydroxyacetone phosphate (DHAP) to sn-glycerol 3-phosphate (G3P), the key precursor for phospholipid synthesis. This is Glycerol-3-phosphate dehydrogenase [NAD(P)+] from Wolbachia pipientis wMel.